The following is a 101-amino-acid chain: NADH-quinone oxidoreductase subunit K (101 aa).

3 consecutive transmembrane segments (helical) span residues Val4–Leu24, Ile29–Ala49, and Val61–Val81.

It belongs to the complex I subunit 4L family. As to quaternary structure, NDH-1 is composed of 14 different subunits. Subunits NuoA, H, J, K, L, M, N constitute the membrane sector of the complex.

It is found in the cell inner membrane. The enzyme catalyses a quinone + NADH + 5 H(+)(in) = a quinol + NAD(+) + 4 H(+)(out). Functionally, NDH-1 shuttles electrons from NADH, via FMN and iron-sulfur (Fe-S) centers, to quinones in the respiratory chain. The immediate electron acceptor for the enzyme in this species is believed to be ubiquinone. Couples the redox reaction to proton translocation (for every two electrons transferred, four hydrogen ions are translocated across the cytoplasmic membrane), and thus conserves the redox energy in a proton gradient. The protein is NADH-quinone oxidoreductase subunit K of Legionella pneumophila (strain Paris).